A 204-amino-acid polypeptide reads, in one-letter code: Dephospho-CoA kinase (204 aa).

Positions 3–204 constitute a DPCK domain; it reads VIGLTGGIGS…DRLDLAYRAH (202 aa). 11 to 16 serves as a coordination point for ATP; the sequence is GSGKSY.

It belongs to the CoaE family.

It localises to the cytoplasm. It catalyses the reaction 3'-dephospho-CoA + ATP = ADP + CoA + H(+). It participates in cofactor biosynthesis; coenzyme A biosynthesis; CoA from (R)-pantothenate: step 5/5. Catalyzes the phosphorylation of the 3'-hydroxyl group of dephosphocoenzyme A to form coenzyme A. The sequence is that of Dephospho-CoA kinase from Ralstonia nicotianae (strain ATCC BAA-1114 / GMI1000) (Ralstonia solanacearum).